The following is a 554-amino-acid chain: Carboxypeptidase Y homolog A (554 aa).

The signal sequence occupies residues 1–17; sequence MRVAASTVLLGVASAAS. The propeptide occupies 18–137; sequence FQQQTQHVLS…KLADFNLRVK (120 aa). 5 cysteine pairs are disulfide-bonded: Cys-191/Cys-431, Cys-325/Cys-339, Cys-349/Cys-372, Cys-356/Cys-365, and Cys-394/Cys-401. Asn-222 carries N-linked (GlcNAc...) asparagine glycosylation. Ser-278 is an active-site residue. Asp-470 is an active-site residue. Asn-518 carries an N-linked (GlcNAc...) asparagine glycan. His-529 is a catalytic residue.

It belongs to the peptidase S10 family.

The protein localises to the vacuole. It catalyses the reaction Release of a C-terminal amino acid with broad specificity.. Vacuolar carboxypeptidase involved in degradation of small peptides. Digests preferentially peptides containing an aliphatic or hydrophobic residue in P1' position, as well as methionine, leucine or phenylalanine in P1 position of ester substrate. This is Carboxypeptidase Y homolog A (CPYA) from Podospora anserina (strain S / ATCC MYA-4624 / DSM 980 / FGSC 10383) (Pleurage anserina).